We begin with the raw amino-acid sequence, 414 residues long: TAR DNA-binding protein 43 (414 aa).

Glycyl lysine isopeptide (Lys-Gly) (interchain with G-Cter in SUMO2) cross-links involve residues Lys79, Lys84, Lys95, Lys102, and Lys181. 2 RRM domains span residues Ser104–Glu200 and Arg191–Pro262. Ser183 bears the Phosphoserine mark. The segment at Glu216 to Met414 is interaction with UBQLN2. Over residues Glu261–Gly274 the composition is skewed to basic and acidic residues. 2 disordered regions span residues Glu261–Asn301 and Ala341–Met414. Residue Lys263 forms a Glycyl lysine isopeptide (Lys-Gly) (interchain with G-Cter in SUMO2) linkage. Positions Arg275–Asn301 are enriched in gly residues. At Ser292 the chain carries Phosphoserine. At Arg293 the chain carries Omega-N-methylarginine. 2 stretches are compositionally biased toward low complexity: residues Ser342–Ser358 and Gly368–Gly392. The span at Ser393–Gly402 shows a compositional bias: gly residues. Over residues Met405–Met414 the composition is skewed to polar residues.

In terms of assembly, homodimer. Homooligomer (via its N-terminal domain). Interacts with BRDT. Binds specifically to pyrimidine-rich motifs of TAR DNA and to single stranded TG repeated sequences. Binds to RNA, specifically to UG repeated sequences with a minimum of six contiguous repeats. Interacts with ATXN2; the interaction is RNA-dependent. Interacts with MATR3. Interacts with UBQLN2. Interacts with HNRNPA2B1. Interacts with ZNF106. Interacts with CNOT7/CAF1. Interacts with CRY2. Interacts with PPIA/CYPA; the interaction is dependent on RNA-binding activity of TARDBP and PPIase activity of PPIA/CYPA. Acetylation of PPIA/CYPA at 'Lys-125' favors the interaction of TARDBP with PPIA/CYPA. Hyperphosphorylated. In terms of processing, ubiquitinated.

It is found in the nucleus. It localises to the cytoplasm. Its subcellular location is the stress granule. The protein resides in the mitochondrion. Functionally, RNA-binding protein that is involved in various steps of RNA biogenesis and processing. Preferentially binds, via its two RNA recognition motifs RRM1 and RRM2, to GU-repeats on RNA molecules predominantly localized within long introns and in the 3'UTR of mRNAs. In turn, regulates the splicing of many non-coding and protein-coding RNAs including proteins involved in neuronal survival, as well as mRNAs that encode proteins relevant for neurodegenerative diseases. Plays a role in maintaining mitochondrial homeostasis by regulating the processing of mitochondrial transcripts. Also regulates mRNA stability by recruiting CNOT7/CAF1 deadenylase on mRNA 3'UTR leading to poly(A) tail deadenylation and thus shortening. In response to oxidative insult, associates with stalled ribosomes localized to stress granules (SGs) and contributes to cell survival. Also participates in the normal skeletal muscle formation and regeneration, forming cytoplasmic myo-granules and binding mRNAs that encode sarcomeric proteins. Plays a role in the maintenance of the circadian clock periodicity via stabilization of the CRY1 and CRY2 proteins in a FBXL3-dependent manner. Negatively regulates the expression of CDK6. Regulates the expression of HDAC6, ATG7 and VCP in a PPIA/CYPA-dependent manner. The protein is TAR DNA-binding protein 43 (Tardbp) of Mus musculus (Mouse).